The sequence spans 579 residues: SLAIN motif-containing protein 1 (579 aa).

Disordered regions lie at residues 1–21 (MMAE…GPGP), 60–95 (LLLQ…GPGA), 135–162 (GGGG…PPTL), 233–258 (YTSR…LEDD), 289–313 (STSA…TCSD), and 347–454 (IPHS…PGQI). A compositionally biased stretch (low complexity) spans 9 to 21 (ASPVAASGAGPGP). Residues 21-56 (PVVNAELEVKKLQELVRKLEKQNEQLRSRAASAAAA) are a coiled coil. The segment covering 63–73 (QPPPPSAPPPA) has biased composition (pro residues). Positions 141 to 154 (EPGTAGTPPGEAAT) are enriched in low complexity. Polar residues predominate over residues 233-243 (YTSRGSPLSPQ). Residue Ser241 is modified to Phosphoserine. Low complexity-rich tracts occupy residues 244–253 (SSIDSELSTS) and 289–305 (STSA…SLSS). Over residues 362–373 (SPSTQYFPSNNF) the composition is skewed to polar residues. Positions 374-390 (QQPQYYPPQAQTADQQP) are enriched in low complexity. Residues 412–432 (AAASSNLSSPVTVRSSQSFDS) show a composition bias toward polar residues. An Asymmetric dimethylarginine modification is found at Arg469. The disordered stretch occupies residues 479–516 (SPTVQGSSSSGSSGSSGGSGSGMPLSNGTQLYSTTGIP). The span at 502 to 516 (PLSNGTQLYSTTGIP) shows a compositional bias: polar residues. Arg554 bears the Asymmetric dimethylarginine mark.

Belongs to the SLAIN motif-containing family. In terms of assembly, interacts with MAPRE1, MAPRE2, MAPRE3 and CKAP5. Interacts with ZDHHC17 (via ANK repeats). As to expression, expressed in embryonic stem cells. Expressed in adult bone marrow, brain, kidney, lung, testis and thymus. Expressed in colon. Isoform 1 is highly expressed in brain. Isoform 2 is more widely expressed in bone marrow, brain, colon, kidney, lung and thymus.

The protein localises to the cytoplasm. It is found in the cytoskeleton. Functionally, microtubule plus-end tracking protein that might be involved in the regulation of cytoplasmic microtubule dynamics, microtubule organization and microtubule elongation. The polypeptide is SLAIN motif-containing protein 1 (Slain1) (Mus musculus (Mouse)).